A 195-amino-acid chain; its full sequence is Shikimate kinase (195 aa).

33 to 38 (GAGKTT) contributes to the ATP binding site. Position 37 (Thr-37) interacts with Mg(2+). Asp-55, Arg-79, and Gly-101 together coordinate substrate. Arg-139 contacts ATP. Residue Arg-158 participates in substrate binding. Position 175 (Arg-175) interacts with ATP.

The protein belongs to the shikimate kinase family. In terms of assembly, monomer. The cofactor is Mg(2+).

Its subcellular location is the cytoplasm. It catalyses the reaction shikimate + ATP = 3-phosphoshikimate + ADP + H(+). The protein operates within metabolic intermediate biosynthesis; chorismate biosynthesis; chorismate from D-erythrose 4-phosphate and phosphoenolpyruvate: step 5/7. Its function is as follows. Catalyzes the specific phosphorylation of the 3-hydroxyl group of shikimic acid using ATP as a cosubstrate. The sequence is that of Shikimate kinase from Nitrosospira multiformis (strain ATCC 25196 / NCIMB 11849 / C 71).